A 156-amino-acid polypeptide reads, in one-letter code: Small ribosomal subunit protein uS7 (156 aa).

Belongs to the universal ribosomal protein uS7 family. In terms of assembly, part of the 30S ribosomal subunit. Contacts proteins S9 and S11.

Its function is as follows. One of the primary rRNA binding proteins, it binds directly to 16S rRNA where it nucleates assembly of the head domain of the 30S subunit. Is located at the subunit interface close to the decoding center, probably blocks exit of the E-site tRNA. This Rhizobium leguminosarum bv. trifolii (strain WSM2304) protein is Small ribosomal subunit protein uS7.